We begin with the raw amino-acid sequence, 85 residues long: Large ribosomal subunit protein bL27 (85 aa).

Residues 1 to 21 (MAHKKAGGSSRNGRDSEAKRL) are disordered.

This sequence belongs to the bacterial ribosomal protein bL27 family.

This Aeromonas hydrophila subsp. hydrophila (strain ATCC 7966 / DSM 30187 / BCRC 13018 / CCUG 14551 / JCM 1027 / KCTC 2358 / NCIMB 9240 / NCTC 8049) protein is Large ribosomal subunit protein bL27.